The primary structure comprises 481 residues: GDP-fucose protein O-fucosyltransferase 2 (481 aa).

Positions 1-22 (MKGRAHIWVALLLACLPPRFRN) are cleaved as a signal peptide. GDP-beta-L-fucose-binding positions include 59-63 (GEGFN), 287-289 (HLR), D365, and 382-383 (RF). The active-site Proton acceptor is the E60.

It belongs to the glycosyltransferase 68 family.

It localises to the endoplasmic reticulum. The catalysed reaction is L-seryl-[protein] + GDP-beta-L-fucose = 3-O-(alpha-L-fucosyl)-L-seryl-[protein] + GDP + H(+). It carries out the reaction L-threonyl-[protein] + GDP-beta-L-fucose = 3-O-(alpha-L-fucosyl)-L-threonyl-[protein] + GDP + H(+). The protein operates within protein modification; protein glycosylation. Its function is as follows. Catalyzes the reaction that attaches fucose through an O-glycosidic linkage to a conserved serine or threonine residue in the consensus sequence C1-X-X-S/T-C2 of thrombospondin type I repeats (TSRs) where C1 and C2 are the first and second cysteines of the repeat, respectively. O-fucosylates sporozoite proteins CSP and TRAP. O-fucosylation regulates stability and intracellular trafficking of TRAP but not of CSP. Probably by regulating protein O-fucosylation, may play a role in parasite transmission to the mosquito vector and/or infection of the vertebrate host hepatocytes; however, POFUT2 involvement in transmission/infection is controversial. In Plasmodium vivax (strain Salvador I), this protein is GDP-fucose protein O-fucosyltransferase 2.